We begin with the raw amino-acid sequence, 609 residues long: Thiamine metabolism regulatory protein THI3 (609 aa).

The interval 578-598 is disordered; the sequence is SKQVQEENENSSAVNTPTPEF.

This sequence belongs to the TPP enzyme family. Requires Mg(2+) as cofactor. It depends on thiamine diphosphate as a cofactor.

It is found in the nucleus. It catalyses the reaction 4-methyl-2-oxopentanoate + H(+) = 3-methylbutanal + CO2. The enzyme catalyses (S)-3-methyl-2-oxopentanoate + H(+) = 2-methylbutanal + CO2. The protein operates within amino-acid degradation; Ehrlich pathway. One of five 2-oxo acid decarboxylases (PDC1, PDC5, PDC6, ARO10, and THI3) involved in amino acid catabolism. The enzyme catalyzes the decarboxylation of amino acids, which, in a first step, have been transaminated to the corresponding 2-oxo acids (alpha-keto-acids). In a third step, the resulting aldehydes are reduced to alcohols, collectively referred to as fusel oils or alcohols. Its preferred substrates are the transaminated amino acids derived from leucine (4-methyl-2-oxopentanoate, also alpha-keto-isocaproate) and isoleucine ((3S)-3-methyl-2-oxopentanoate, also alpha-keto-beta-methylvalerate), whereas transaminated valine, transaminated aromatic amino acids, and pyruvate are no substrates. In analogy to the pyruvate decarboxylases the enzyme may in a side-reaction catalyze condensation (or carboligation) reactions leading to the formation of 2-hydroxy ketone, collectively called acyloins. The enzyme is also positively regulating the thiamine metabolism by a molecular mechanism that may involve thiamine concentration sensing and signal transmission. The polypeptide is Thiamine metabolism regulatory protein THI3 (THI3) (Saccharomyces cerevisiae (strain ATCC 204508 / S288c) (Baker's yeast)).